Here is a 273-residue protein sequence, read N- to C-terminus: Peroxiredoxin-4 (273 aa).

The first 40 residues, 1-40 (METWSKLLDGTTPSRRWRKLVLLLPPLLLFLLQTEALQGL), serve as a signal peptide directing secretion. Residues 81–239 (AKISKPAPYW…TLRLVQAFQY (159 aa)) enclose the Thioredoxin domain. Cysteine 126 functions as the Cysteine sulfenic acid (-SOH) intermediate in the catalytic mechanism.

It belongs to the peroxiredoxin family. AhpC/Prx1 subfamily. In terms of assembly, homodimer; disulfide-linked, upon oxidation. 5 homodimers assemble to form a ring-like decamer. In terms of processing, the enzyme can be inactivated by further oxidation of the cysteine sulfenic acid (C(P)-SOH) to sulphinic acid (C(P)-SO2H) and sulphonic acid (C(P)-SO3H) instead of its condensation to a disulfide bond.

It localises to the cytoplasm. The protein resides in the endoplasmic reticulum. The protein localises to the secreted. The catalysed reaction is a hydroperoxide + [thioredoxin]-dithiol = an alcohol + [thioredoxin]-disulfide + H2O. Thiol-specific peroxidase that catalyzes the reduction of hydrogen peroxide and organic hydroperoxides to water and alcohols, respectively. Plays a role in cell protection against oxidative stress by detoxifying peroxides and as sensor of hydrogen peroxide-mediated signaling events. Regulates the activation of NF-kappa-B in the cytosol by a modulation of I-kappa-B-alpha phosphorylation. In Rattus norvegicus (Rat), this protein is Peroxiredoxin-4 (Prdx4).